The sequence spans 225 residues: Phosphoribosylformylglycinamidine synthase subunit PurQ (225 aa).

A Glutamine amidotransferase type-1 domain is found at 5 to 225; the sequence is RFGIVVFPGS…WQSIVQSLAG (221 aa). The active-site Nucleophile is Cys-89. Active-site residues include His-198 and Glu-200.

Part of the FGAM synthase complex composed of 1 PurL, 1 PurQ and 2 PurS subunits.

The protein resides in the cytoplasm. It carries out the reaction N(2)-formyl-N(1)-(5-phospho-beta-D-ribosyl)glycinamide + L-glutamine + ATP + H2O = 2-formamido-N(1)-(5-O-phospho-beta-D-ribosyl)acetamidine + L-glutamate + ADP + phosphate + H(+). The catalysed reaction is L-glutamine + H2O = L-glutamate + NH4(+). The protein operates within purine metabolism; IMP biosynthesis via de novo pathway; 5-amino-1-(5-phospho-D-ribosyl)imidazole from N(2)-formyl-N(1)-(5-phospho-D-ribosyl)glycinamide: step 1/2. In terms of biological role, part of the phosphoribosylformylglycinamidine synthase complex involved in the purines biosynthetic pathway. Catalyzes the ATP-dependent conversion of formylglycinamide ribonucleotide (FGAR) and glutamine to yield formylglycinamidine ribonucleotide (FGAM) and glutamate. The FGAM synthase complex is composed of three subunits. PurQ produces an ammonia molecule by converting glutamine to glutamate. PurL transfers the ammonia molecule to FGAR to form FGAM in an ATP-dependent manner. PurS interacts with PurQ and PurL and is thought to assist in the transfer of the ammonia molecule from PurQ to PurL. In Synechococcus sp. (strain JA-3-3Ab) (Cyanobacteria bacterium Yellowstone A-Prime), this protein is Phosphoribosylformylglycinamidine synthase subunit PurQ.